Consider the following 142-residue polypeptide: ATP synthase F(0) complex subunit C3, mitochondrial (142 aa).

The N-terminal 67 residues, Met1–Arg67, are a transit peptide targeting the mitochondrion. The chain crosses the membrane as a helical span at residues Val83–Tyr103. Residue Lys110 is modified to N6,N6,N6-trimethyllysine. A helical transmembrane segment spans residues Ile118–Ile138.

Belongs to the ATPase C chain family. As to quaternary structure, F-type ATPases have 2 components, CF(1) - the catalytic core - and CF(0) - the membrane proton channel. CF(1) has five subunits: alpha(3), beta(3), gamma(1), delta(1), epsilon(1). CF(0) has three main subunits: a, b and c. Interacts with TMEM70 and TMEM242. In terms of processing, trimethylated by ATPSCKMT at Lys-110. Methylation is required for proper incorporation of the C subunit into the ATP synthase complex and mitochondrial respiration.

It is found in the mitochondrion membrane. Its function is as follows. Mitochondrial membrane ATP synthase (F(1)F(0) ATP synthase or Complex V) produces ATP from ADP in the presence of a proton gradient across the membrane which is generated by electron transport complexes of the respiratory chain. F-type ATPases consist of two structural domains, F(1) - containing the extramembraneous catalytic core and F(0) - containing the membrane proton channel, linked together by a central stalk and a peripheral stalk. During catalysis, ATP synthesis in the catalytic domain of F(1) is coupled via a rotary mechanism of the central stalk subunits to proton translocation. Part of the complex F(0) domain. A homomeric c-ring of probably 10 subunits is part of the complex rotary element. The polypeptide is ATP synthase F(0) complex subunit C3, mitochondrial (Homo sapiens (Human)).